Reading from the N-terminus, the 278-residue chain is Small ribosomal subunit protein uS3 (278 aa).

The region spanning 39 to 107 (LRKAISKKYV…KVQLNIVEIS (69 aa)) is the KH type-2 domain. The tract at residues 255-278 (AEIPAEEKPKRVVKKAENITKEEE) is disordered.

The protein belongs to the universal ribosomal protein uS3 family. Part of the 30S ribosomal subunit. Forms a tight complex with proteins S10 and S14.

Binds the lower part of the 30S subunit head. Binds mRNA in the 70S ribosome, positioning it for translation. The chain is Small ribosomal subunit protein uS3 from Dehalococcoides mccartyi (strain ATCC BAA-2100 / JCM 16839 / KCTC 5957 / BAV1).